The chain runs to 156 residues: Small ribosomal subunit protein uS7 (156 aa).

Belongs to the universal ribosomal protein uS7 family. As to quaternary structure, part of the 30S ribosomal subunit. Contacts proteins S9 and S11.

One of the primary rRNA binding proteins, it binds directly to 16S rRNA where it nucleates assembly of the head domain of the 30S subunit. Is located at the subunit interface close to the decoding center, probably blocks exit of the E-site tRNA. The chain is Small ribosomal subunit protein uS7 from Azoarcus sp. (strain BH72).